The primary structure comprises 375 residues: 4,4'-diaponeurosporenoate glycosyltransferase (375 aa).

4 consecutive transmembrane segments (helical) span residues 3-23, 164-184, 277-297, and 330-350; these read WLSR…ALIF, FYEG…NVFS, IMAA…GLCL, and FSNL…KIFI.

This sequence belongs to the glycosyltransferase 2 family. CrtQ subfamily.

The protein resides in the cell membrane. Its pathway is carotenoid biosynthesis; staphyloxanthin biosynthesis; staphyloxanthin from farnesyl diphosphate: step 4/5. Catalyzes the glycosylation of 4,4'-diaponeurosporenoate, i.e. the esterification of glucose at the C1'' position with the carboxyl group of 4,4'-diaponeurosporenic acid, to form glycosyl-4,4'-diaponeurosporenoate. This is a step in the biosynthesis of staphyloxanthin, an orange pigment present in most staphylococci strains. This is 4,4'-diaponeurosporenoate glycosyltransferase (crtQ) from Staphylococcus aureus (strain bovine RF122 / ET3-1).